We begin with the raw amino-acid sequence, 291 residues long: Probable cell wall amidase LytH (291 aa).

Positions 1–40 (MKKIEAWLSKKGLKNKRTLIVVIAFVLFIIFLFLLLNSNS) are cleaved as a signal peptide. In terms of domain architecture, SH3b spans 41-105 (EDSGNITITE…WIAGWHTNLD (65 aa)). Positions 118–140 (QGKTIVLDPGHGGSDQGASSNTK) are disordered. The MurNAc-LAA domain maps to 122–286 (IVLDPGHGGS…LEQAIVDGLK (165 aa)).

This sequence belongs to the N-acetylmuramoyl-L-alanine amidase 3 family.

Its subcellular location is the secreted. Probably involved in cell-wall metabolism. The chain is Probable cell wall amidase LytH (lytH) from Staphylococcus aureus (strain USA300).